The following is a 211-amino-acid chain: Small ribosomal subunit protein uS5 (211 aa).

Residues 50 to 113 enclose the S5 DRBM domain; that stretch reads LEDEVLDINM…DNAKINITRI (64 aa).

This sequence belongs to the universal ribosomal protein uS5 family. As to quaternary structure, part of the 30S ribosomal subunit. Contacts protein S4.

With S4 and S12 plays an important role in translational accuracy. The chain is Small ribosomal subunit protein uS5 from Methanococcoides burtonii (strain DSM 6242 / NBRC 107633 / OCM 468 / ACE-M).